A 569-amino-acid polypeptide reads, in one-letter code: MKTTATSFVTGERVVVFVVVSRILLSLPLSLISHGFSLFLLSLSAFLVEIRVETSPFLLSHFSSRRGASSGILLGAVTLPSVMISKLVQLSRAISIHEAEQDELAHVTMQYWAASASCCAILIYLSVIMSQVRKDESLSSSSIWLTRVSLTGTVLYGVACFVSLSMISHTGLNTSLKMLWMLFHGLAAVKLIRHLLCTFPSCASIGEALLVTSGLVLYFGDFLACTIAKIFEKLIPVDLVSISYGIKRTETGIIVQGLLLGLLLFPMVFRFVLHIYESSLRKRDARQRNCSDAAKSVLFFVSLLFFMVVAVPSWMQFVHDFNQHPFLWVLTFVFSEPLKRLSLCIYWILLIVVSVSRFYNISRSSKVERILLRKYYHLMAVLMFLPALVLQPKFLDLAFGAALAVFVALEIIRIWRIQPLGEPLHQFMNAFTDHRDSEHLIVSHFSLLLGCALPIWMSSGFNDRALSPFAGILSLGIGDTMASMVGHKYGVLRWSKTGKKTVEGTAAGITSMMAVCFVLVPILASMGYILSQGWWSLLVAVTATGMLEAYTAQLDNAFIPLVFYSLLCL.

The Cytoplasmic segment spans residues 1-22 (MKTTATSFVTGERVVVFVVVSR). A helical transmembrane segment spans residues 23–43 (ILLSLPLSLISHGFSLFLLSL). Over 44-67 (SAFLVEIRVETSPFLLSHFSSRRG) the chain is Lumenal. The helical transmembrane segment at 68-88 (ASSGILLGAVTLPSVMISKLV) threads the bilayer. Topologically, residues 89–108 (QLSRAISIHEAEQDELAHVT) are cytoplasmic. The helical transmembrane segment at 109 to 129 (MQYWAASASCCAILIYLSVIM) threads the bilayer. Topologically, residues 130–147 (SQVRKDESLSSSSIWLTR) are lumenal. A helical membrane pass occupies residues 148–168 (VSLTGTVLYGVACFVSLSMIS). Over 169 to 178 (HTGLNTSLKM) the chain is Cytoplasmic. A helical transmembrane segment spans residues 179-199 (LWMLFHGLAAVKLIRHLLCTF). At 200 to 207 (PSCASIGE) the chain is on the lumenal side. A helical transmembrane segment spans residues 208–228 (ALLVTSGLVLYFGDFLACTIA). At 229–252 (KIFEKLIPVDLVSISYGIKRTETG) the chain is on the cytoplasmic side. Residues 253–273 (IIVQGLLLGLLLFPMVFRFVL) form a helical membrane-spanning segment. Over 274–296 (HIYESSLRKRDARQRNCSDAAKS) the chain is Lumenal. Residue Asn289 is glycosylated (N-linked (GlcNAc...) asparagine). Residues 297–317 (VLFFVSLLFFMVVAVPSWMQF) traverse the membrane as a helical segment. Residues 318–340 (VHDFNQHPFLWVLTFVFSEPLKR) are Cytoplasmic-facing. A helical membrane pass occupies residues 341–361 (LSLCIYWILLIVVSVSRFYNI). At 362–369 (SRSSKVER) the chain is on the lumenal side. The chain crosses the membrane as a helical span at residues 370 to 390 (ILLRKYYHLMAVLMFLPALVL). The Cytoplasmic portion of the chain corresponds to 391 to 393 (QPK). The chain crosses the membrane as a helical span at residues 394-414 (FLDLAFGAALAVFVALEIIRI). Residues 415-440 (WRIQPLGEPLHQFMNAFTDHRDSEHL) are Lumenal-facing. A helical transmembrane segment spans residues 441–461 (IVSHFSLLLGCALPIWMSSGF). At 462 to 464 (NDR) the chain is on the cytoplasmic side. A helical transmembrane segment spans residues 465–485 (ALSPFAGILSLGIGDTMASMV). The Lumenal portion of the chain corresponds to 486-508 (GHKYGVLRWSKTGKKTVEGTAAG). Residues 487 to 503 (HKYGVLRWSKTGKKTVE) form a CTP-binding region. The helical transmembrane segment at 509–529 (ITSMMAVCFVLVPILASMGYI) threads the bilayer. Residues 530 to 548 (LSQGWWSLLVAVTATGMLE) are Cytoplasmic-facing. Residues 549-569 (AYTAQLDNAFIPLVFYSLLCL) traverse the membrane as a helical segment.

The protein belongs to the polyprenol kinase family.

Its subcellular location is the endoplasmic reticulum membrane. The catalysed reaction is a di-trans,poly-cis-dolichol + CTP = a di-trans,poly-cis-dolichyl phosphate + CDP + H(+). Functionally, essential for pollen development. Involved in protein N-glycosylation in the endoplasmic reticulum (ER), especially in the female gametophyte. Mediates pollen tube (PT) reception in synergids through protein glycosylation. The sequence is that of Dolichol kinase EVAN from Arabidopsis thaliana (Mouse-ear cress).